The primary structure comprises 391 residues: Phosphoprotein (391 aa).

Residues Thr-10, Thr-16, and Thr-39 each carry the phosphothreonine modification. Position 69 is a phosphoserine (Ser-69). Disordered regions lie at residues 82 to 101 (SSSEVGTGGTQIPEPLFAQT) and 143 to 208 (PRTS…PANV). 3 positions are modified to phosphothreonine: Thr-91, Thr-150, and Thr-165. Phosphoserine is present on Ser-188. The segment covering 198–208 (LPQQDSTPANV) has biased composition (polar residues). A coiled-coil region spans residues 218-245 (ANEIMDLLRGMDARLQHLEQKVDKVLAQ). Phosphothreonine is present on Thr-250. Ser-257 bears the Phosphoserine mark. Residues Thr-258 and Thr-282 each carry the phosphothreonine modification. Ser-292 and Ser-294 each carry phosphoserine. Phosphothreonine is present on Thr-298. Phosphoserine occurs at positions 301 and 374. The interval 343–391 (AGRKVMITKMITDCVANPQMKQAFEQRLAKASTEDALNDIKRDIIRSAI) is interaction with the nucleoprotein. Positions 348 to 391 (MITKMITDCVANPQMKQAFEQRLAKASTEDALNDIKRDIIRSAI) are x domain (XD). Position 375 is a phosphothreonine (Thr-375).

It belongs to the rubulavirus/avulavirus P protein family. As to quaternary structure, homotetramer. Interacts (via multimerization domain) with polymerase L; this interaction forms the polymerase L-P complex. Interacts (via N-terminus) with N0 (via Ncore); this interaction allows P to chaperon N0 to avoid N polymerization before encapsidation. Interacts (via C-terminus) with N-RNA template; this interaction positions the polymerase on the template for both transcription and replication. Interacts with host RPS6KB1 kinase; this interaction may play a role in the viral replication and transcription.

It is found in the virion. Functionally, essential cofactor of the RNA polymerase L that plays a central role in the transcription and replication by forming the polymerase complex with RNA polymerase L and recruiting L to the genomic N-RNA template for RNA synthesis. Also plays a central role in the encapsidation of nascent RNA chains by forming the encapsidation complex with the nucleocapsid protein N (N-P complex). Acts as a chaperone for newly synthesized free N protein, so-called N0, allowing encapsidation of nascent RNA chains during replication. The nucleoprotein protein N prevents excessive phosphorylation of P, which leads to down-regulation of viral transcription/ replication. Participates, together with N, in the formation of viral factories (viroplasms), which are large inclusions in the host cytoplasm where replication takes place. The chain is Phosphoprotein (V/P) from Mumps orthorubulavirus (MuV).